We begin with the raw amino-acid sequence, 561 residues long: Putative transport protein YbjL (561 aa).

5 helical membrane-spanning segments follow: residues 8 to 28 (LLNG…LCLG), 32 to 52 (LGSI…LLGQ), 66 to 86 (FMLF…SIFF), 94 to 114 (MLAL…GKLF), and 158 to 178 (NLSL…IVGA). 2 RCK C-terminal domains span residues 200-288 (RGLD…SFRN) and 292-373 (VFDR…RIGF). The next 5 helical transmembrane spans lie at 383-403 (LLAF…TFQF), 406-426 (FSFG…LGFM), 451-471 (VFMA…LGAI), 475-495 (MLIA…LFGA), and 540-560 (AIAN…WPGL).

The protein belongs to the AAE transporter (TC 2.A.81) family. YbjL subfamily.

The protein resides in the cell membrane. The sequence is that of Putative transport protein YbjL from Shigella boydii serotype 4 (strain Sb227).